The chain runs to 690 residues: MEKILHMAEGIDIGEMPSYDLMLPKPSKGQKRYLSTYDGQNPPKKQAGSKFHVRARFEPVHFVASSSKAERQEDPYGPQTKDVNGRTHFASMPRNFYQDYTQDSFSIQDGNSQYCNSSGFIFTKDQPVATNMYFDSGNPAPSSTSQQANCQPAPEPPPSQMYPESLVAEKQYFIEKLTATIWKNLSNPEMTSGSDKINYTYMLTRCIQACKTNPEYIYAPLKEIPPADIPKNKKLLTDGYACEVRCQNIYLTTGYAGSKNGSRDRATELAVKLLQKRIEVRVVRRKFKHIIGEDLVVCQIGMLSYEFPPALKPPEDLVVLGKDASGQPIFNSSAKHWTNFVITENANDAIGILNNSASFNKMSIEYKYEMMPNRTWRCRVFLQDHCLAEGYGTKKTSKHAAADEALKVLQKTQPTYPSVKSSQCHSGSSPKGSGKKKDIKDLVVYENSSNPVCTLNDTAQFNRMTVEYVYERMTGLRWKCKVILESEVIAEAVGVKKSVKYEAAGEAVKTLKKTQPTVINNLKKGTVEDVISRNEIQGRSAEEAYKQQIKEDNIGNQLLRKMGWTGGGLGKSGEGIREPISVKEQHKREGLGLDVERVNKIAKRDIEQIIRNYARSESHSDLTFSTELTNDERKQIHQIAQKYGLKSKSHGVGHDRYLVVGRKRRKEDLLDQLKQEGQVGHYELVMPQAN.

Residues 1-296 (MEKILHMAEG…FKHIIGEDLV (296 aa)) are active repression domain. The short motif at 25–45 (KPSKGQKRYLSTYDGQNPPKK) is the Nuclear localization signal element. Disordered regions lie at residues 27-49 (SKGQ…QAGS), 65-85 (SSSK…DVNG), and 133-160 (YFDS…PPSQ). Lys-68 participates in a covalent cross-link: Glycyl lysine isopeptide (Lys-Gly) (interchain with G-Cter in SUMO2). The segment covering 139–150 (PAPSSTSQQANC) has biased composition (polar residues). Residues 296–388 (VVCQIGMLSY…RVFLQDHCLA (93 aa)) mediate DNA binding. Residues 414-425 (PTYPSVKSSQCH) are compositionally biased toward polar residues. Residues 414–436 (PTYPSVKSSQCHSGSSPKGSGKK) are disordered. A Glycyl lysine isopeptide (Lys-Gly) (interchain with G-Cter in SUMO2) cross-link involves residue Lys-500. The 46-residue stretch at 551–596 (EDNIGNQLLRKMGWTGGGLGKSGEGIREPISVKEQHKREGLGLDVE) folds into the G-patch domain. The R3H domain maps to 600 to 664 (KIAKRDIEQI…DRYLVVGRKR (65 aa)). The residue at position 618 (Ser-618) is a Phosphoserine. Residues Lys-666 and Lys-674 each participate in a glycyl lysine isopeptide (Lys-Gly) (interchain with G-Cter in SUMO2) cross-link.

Interacts with NF-kappa-B. Interacts with XRN2. Interacts (via G-patch domain) with DHX15; promoting the RNA helicase activity of DHX15.

It is found in the nucleus. It localises to the nucleolus. Its function is as follows. Enhances the ATPase activity of DHX15 by acting like a brace that tethers mobile sections of DHX15 together, stabilizing a functional conformation with high RNA affinity of DHX15. Involved in the constitutive silencing of the interferon beta promoter, independently of the virus-induced signals, and in the inhibition of the basal and cytokine-induced iNOS promoter activity. Also involved in the regulation of IL-8 transcription. May also act as a DNA-binding transcription regulator: interacts with a specific negative regulatory element (NRE) 5'-AATTCCTCTGA-3' to mediate transcriptional repression of certain NK-kappa-B responsive genes. This Mus musculus (Mouse) protein is NF-kappa-B-repressing factor (Nkrf).